The sequence spans 125 residues: Histone H1-like protein Hc1 (125 aa).

Positions 98–125 are disordered; the sequence is TKAKVKPTKKAAPKTKVKTAKKTRSTKK. Residues 100 to 125 show a composition bias toward basic residues; it reads AKVKPTKKAAPKTKVKTAKKTRSTKK.

This sequence belongs to the histone H1/H5 family. HCT subfamily.

Functionally, might have a role analogous to that of eukaryotic histone proteins. This Chlamydia trachomatis serovar L2 (strain ATCC VR-902B / DSM 19102 / 434/Bu) protein is Histone H1-like protein Hc1 (hctA).